Here is a 362-residue protein sequence, read N- to C-terminus: Heme A synthase (362 aa).

5 helical membrane passes run 15–35 (VRIW…VGGA), 104–124 (VIGI…AIAP), 129–149 (ALWA…WMVA), 161–181 (VRLA…VWTL), and 200–220 (AIAL…VAGL). His-264 serves as a coordination point for heme. A run of 3 helical transmembrane segments spans residues 266 to 285 (MMAY…ALRA), 293 to 313 (GALW…LTLL), and 316 to 336 (VPIG…TLAV). Residue His-324 participates in heme binding.

It belongs to the COX15/CtaA family. Type 2 subfamily. Interacts with CtaB. It depends on heme b as a cofactor.

The protein resides in the cell membrane. The enzyme catalyses Fe(II)-heme o + 2 A + H2O = Fe(II)-heme a + 2 AH2. It functions in the pathway porphyrin-containing compound metabolism; heme A biosynthesis; heme A from heme O: step 1/1. Its function is as follows. Catalyzes the conversion of heme O to heme A by two successive hydroxylations of the methyl group at C8. The first hydroxylation forms heme I, the second hydroxylation results in an unstable dihydroxymethyl group, which spontaneously dehydrates, resulting in the formyl group of heme A. In Rhodopseudomonas palustris (strain BisB5), this protein is Heme A synthase.